Consider the following 602-residue polypeptide: MEKEVIAYLDNETIIDSQSVKNTNLKEIYFDNSKESLEVIRHSCAHLMAQAIKSLYPEAKFFVGPVIEDGFYYDFRVESKIGEEDLVKIEKKMKELAEAKIEISKYEITKSEALAKFQNDDLKQEVLLRIPDRAVSIYKQGEFEDLCRGPHVPNTKFLRFFKLTRVAGAYLGGDEKREMLTRIYGTAFADKESLKEYLTIIEEAKKRDHRKLGTELKLFTFDDEIGGGLPIWLSNGARLRSKLEHMLYKIHRLRGYEPVRGPELLKADAWKISGHYANYKENMYFTQIDEQEYGIKPMNCVGHIKIYQSDVRSYRDLPLKFFEYGVVHRHEKSGVLHGLFRVREFTQDDAHIFCMPSQIKEQVLEILAFVDNLMKLFDFSYEMEISTKPEKAIGDDEIWEIATKALKEALDEQGLKYGIDEGGGAFYGPKIDIKITDALKRKWQCGTIQVDFNLPSRFKLEYTDSDNEKKQPVMLHRAILGSFERFIGILTEHCAGEFPFFIAPTAVGIVPIGEAHIAYAKEIQKELLELNIDSEVYEKNESLSKKIRIAEKQKLPMILVLGDDEVAKRSVALRDRRAKEQKNLSLDEFIKLVKEKMSEVHF.

Residues 208 to 499 form a catalytic region; the sequence is DHRKLGTELK…LTEHCAGEFP (292 aa). Residues C300, H351, and H476 each coordinate Zn(2+).

It belongs to the class-II aminoacyl-tRNA synthetase family. Homodimer. Zn(2+) is required as a cofactor.

It is found in the cytoplasm. The catalysed reaction is tRNA(Thr) + L-threonine + ATP = L-threonyl-tRNA(Thr) + AMP + diphosphate + H(+). Catalyzes the attachment of threonine to tRNA(Thr) in a two-step reaction: L-threonine is first activated by ATP to form Thr-AMP and then transferred to the acceptor end of tRNA(Thr). Also edits incorrectly charged L-seryl-tRNA(Thr). The polypeptide is Threonine--tRNA ligase (Campylobacter jejuni subsp. jejuni serotype O:2 (strain ATCC 700819 / NCTC 11168)).